Here is a 201-residue protein sequence, read N- to C-terminus: tRNA (guanine-N(7)-)-methyltransferase (201 aa).

S-adenosyl-L-methionine is bound by residues Glu33, Glu58, Asp85, and Asp106. Asp106 is a catalytic residue. Residues Lys110, Asp142, and 180-183 (TTYE) contribute to the substrate site.

The protein belongs to the class I-like SAM-binding methyltransferase superfamily. TrmB family.

It catalyses the reaction guanosine(46) in tRNA + S-adenosyl-L-methionine = N(7)-methylguanosine(46) in tRNA + S-adenosyl-L-homocysteine. It functions in the pathway tRNA modification; N(7)-methylguanine-tRNA biosynthesis. Functionally, catalyzes the formation of N(7)-methylguanine at position 46 (m7G46) in tRNA. This is tRNA (guanine-N(7)-)-methyltransferase from Mesomycoplasma hyopneumoniae (strain 232) (Mycoplasma hyopneumoniae).